The primary structure comprises 56 residues: Large ribosomal subunit protein bL33 (56 aa).

A compositionally biased stretch (basic and acidic residues) spans 1-12 (MASKGGRDKIKL). A disordered region spans residues 1–28 (MASKGGRDKIKLESTAGTGHFYTTTKNK). Over residues 15–25 (TAGTGHFYTTT) the composition is skewed to polar residues.

Belongs to the bacterial ribosomal protein bL33 family.

The chain is Large ribosomal subunit protein bL33 from Cupriavidus necator (strain ATCC 17699 / DSM 428 / KCTC 22496 / NCIMB 10442 / H16 / Stanier 337) (Ralstonia eutropha).